Consider the following 354-residue polypeptide: Ornithine transcarbamylase, mitochondrial (354 aa).

The N-terminal 32 residues, 1–32, are a transit peptide targeting the mitochondrion; that stretch reads MLFNLKNLYRITKLTQNSKHLPRHFCRGPPNQ. Carbamoyl phosphate-binding positions include 90–94, Arg-141, and His-168; that span reads STRTR. Residue Arg-141 participates in L-ornithine binding. L-ornithine is bound by residues Asn-199, 263–267, 302–305, and Arg-330; these read DTWIS and HCLP. Residue Cys-303 is part of the active site. Arg-330 is a binding site for carbamoyl phosphate.

It belongs to the aspartate/ornithine carbamoyltransferase superfamily. OTCase family. As to quaternary structure, homotrimer. In terms of processing, cleavage of the precursor form to the active form occurs only in the kidney. As to expression, expressed in kidney, brain, heart, liver, pancreas, gizzard, small intestine and breast muscle. More abundant in mitochondrion-rich organs (heart, liver and brain) than in other organs. Activity is only detected in the kidney.

It localises to the mitochondrion matrix. It catalyses the reaction carbamoyl phosphate + L-ornithine = L-citrulline + phosphate + H(+). It participates in nitrogen metabolism; urea cycle; L-citrulline from L-ornithine and carbamoyl phosphate: step 1/1. Inhibition by ornithine increases at higher pH. Functionally, catalyzes the second step of the urea cycle, the condensation of carbamoyl phosphate with L-ornithine to form L-citrulline. The urea cycle ensures the detoxification of ammonia by converting it to urea for excretion. This chain is Ornithine transcarbamylase, mitochondrial, found in Gallus gallus (Chicken).